A 221-amino-acid polypeptide reads, in one-letter code: Eukaryotic translation initiation factor 3 subunit K (221 aa).

Positions 46-207 constitute a PCI domain; that stretch reads YDLEANLACL…NIKTKHITEK (162 aa).

Belongs to the eIF-3 subunit K family. As to quaternary structure, component of the eukaryotic translation initiation factor 3 (eIF-3) complex.

The protein localises to the cytoplasm. Its function is as follows. Component of the eukaryotic translation initiation factor 3 (eIF-3) complex, which is involved in protein synthesis of a specialized repertoire of mRNAs and, together with other initiation factors, stimulates binding of mRNA and methionyl-tRNAi to the 40S ribosome. The eIF-3 complex specifically targets and initiates translation of a subset of mRNAs involved in cell proliferation. This Culex quinquefasciatus (Southern house mosquito) protein is Eukaryotic translation initiation factor 3 subunit K.